The following is a 236-amino-acid chain: Orotidine 5'-phosphate decarboxylase (236 aa).

Substrate is bound by residues aspartate 16, lysine 38, 65 to 74 (DLKYHDIPNT), threonine 124, arginine 185, glutamine 194, glycine 214, and arginine 215. Lysine 67 functions as the Proton donor in the catalytic mechanism.

This sequence belongs to the OMP decarboxylase family. Type 1 subfamily. As to quaternary structure, homodimer.

It carries out the reaction orotidine 5'-phosphate + H(+) = UMP + CO2. It functions in the pathway pyrimidine metabolism; UMP biosynthesis via de novo pathway; UMP from orotate: step 2/2. In terms of biological role, catalyzes the decarboxylation of orotidine 5'-monophosphate (OMP) to uridine 5'-monophosphate (UMP). The sequence is that of Orotidine 5'-phosphate decarboxylase from Hydrogenovibrio crunogenus (strain DSM 25203 / XCL-2) (Thiomicrospira crunogena).